The primary structure comprises 139 residues: D-ribose pyranase (139 aa).

The Proton donor role is filled by His-20. Substrate contacts are provided by residues Asp-28, His-106, and 128-130 (YAN).

Belongs to the RbsD / FucU family. RbsD subfamily. Homodecamer.

It is found in the cytoplasm. It carries out the reaction beta-D-ribopyranose = beta-D-ribofuranose. Its pathway is carbohydrate metabolism; D-ribose degradation; D-ribose 5-phosphate from beta-D-ribopyranose: step 1/2. Functionally, catalyzes the interconversion of beta-pyran and beta-furan forms of D-ribose. This is D-ribose pyranase from Glaesserella parasuis serovar 5 (strain SH0165) (Haemophilus parasuis).